We begin with the raw amino-acid sequence, 159 residues long: Major strawberry allergen Fra a 1-C (159 aa).

It belongs to the BetVI family. Monomer.

In Fragaria ananassa (Strawberry), this protein is Major strawberry allergen Fra a 1-C.